A 201-amino-acid polypeptide reads, in one-letter code: Recombination protein RecR (201 aa).

The C4-type zinc-finger motif lies at 60-75 (CSRCGNVDTVDPCTVC). The 96-residue stretch at 83–178 (SVIIVVEDVS…KITRLAHGVP (96 aa)) folds into the Toprim domain.

The protein belongs to the RecR family.

Functionally, may play a role in DNA repair. It seems to be involved in an RecBC-independent recombinational process of DNA repair. It may act with RecF and RecO. In Rhizobium etli (strain ATCC 51251 / DSM 11541 / JCM 21823 / NBRC 15573 / CFN 42), this protein is Recombination protein RecR.